A 120-amino-acid polypeptide reads, in one-letter code: NAD(P)H-quinone oxidoreductase subunit 3, chloroplastic (120 aa).

A run of 3 helical transmembrane segments spans residues Ile9–Gly29, Met64–Met84, and Val88–Ser108.

The protein belongs to the complex I subunit 3 family. As to quaternary structure, NDH is composed of at least 16 different subunits, 5 of which are encoded in the nucleus.

It is found in the plastid. Its subcellular location is the chloroplast thylakoid membrane. The enzyme catalyses a plastoquinone + NADH + (n+1) H(+)(in) = a plastoquinol + NAD(+) + n H(+)(out). The catalysed reaction is a plastoquinone + NADPH + (n+1) H(+)(in) = a plastoquinol + NADP(+) + n H(+)(out). In terms of biological role, NDH shuttles electrons from NAD(P)H:plastoquinone, via FMN and iron-sulfur (Fe-S) centers, to quinones in the photosynthetic chain and possibly in a chloroplast respiratory chain. The immediate electron acceptor for the enzyme in this species is believed to be plastoquinone. Couples the redox reaction to proton translocation, and thus conserves the redox energy in a proton gradient. In Gossypium hirsutum (Upland cotton), this protein is NAD(P)H-quinone oxidoreductase subunit 3, chloroplastic.